Consider the following 642-residue polypeptide: A-kinase anchor protein 8-like (642 aa).

The tract at residues 1–269 is sufficient for activation of CTE-mediated expression; it reads MSYTGFVQGS…MRRTWKTWTT (269 aa). Arg209 carries the post-translational modification Asymmetric dimethylarginine; alternate. Arg209 is modified (omega-N-methylarginine; alternate). An omega-N-methylarginine mark is found at Arg218, Arg238, and Arg248. Lys258 is subject to N6-acetyllysine. A disordered region spans residues 265–382; it reads KTWTTADFRT…QDKQKKRQRD (118 aa). Thr268 is subject to Phosphothreonine. The Nuclear localization signal motif lies at 275–280; sequence KKKKRK. The Nuclear export signal (NES) motif lies at 281 to 297; the sequence is QGGSPDEPDSKATRTDC. Position 284 is a phosphoserine (Ser284). The segment covering 288 to 297 has biased composition (basic and acidic residues); sequence PDSKATRTDC. Thr293 is subject to Phosphothreonine. Phosphoserine is present on Ser298. Positions 299–315 are enriched in acidic residues; it reads DNSDSDNDEGTEGEAAE. Residues 338–350 show a composition bias toward basic and acidic residues; that stretch reads EDGREEGKEDPEK. The Nuclear localization signal motif lies at 363-365; that stretch reads KRK. 2 C2H2 AKAP95-type zinc fingers span residues 392 to 414 and 485 to 508; these read CSLCKYRTFYEDEMGSHLDSKFH and CAACDLFIPMQFGIIQKHLKTMDH. Positions 546–642 are disordered; that stretch reads GENPFTDNPE…EDDEEGGGGP (97 aa). A compositionally biased stretch (acidic residues) spans 553–564; sequence NPEEEKEQDEVE. Over residues 585 to 605 the composition is skewed to pro residues; the sequence is AQPPVPLEPAPGTTTPPPPPP. Acidic residues predominate over residues 631–642; that stretch reads DMEDDEEGGGGP.

This sequence belongs to the AKAP95 family. As to quaternary structure, interacts (via N-terminus) with DHX9 (via RGG region). Interacts with TMPO isoform Beta, PRPF40A, RNF43, lamin-B. Interacts with HDAC3; increased during mitosis. Phosphorylated on serine or threonine residues possibly by PKA.

The protein localises to the nucleus. The protein resides in the nucleus matrix. Its subcellular location is the nucleus speckle. It localises to the PML body. It is found in the cytoplasm. In terms of biological role, could play a role in constitutive transport element (CTE)-mediated gene expression by association with DHX9. Increases CTE-dependent nuclear unspliced mRNA export. Proposed to target PRKACA to the nucleus but does not seem to be implicated in the binding of regulatory subunit II of PKA. May be involved in nuclear envelope breakdown and chromatin condensation. May be involved in anchoring nuclear membranes to chromatin in interphase and in releasing membranes from chromating at mitosis. May regulate the initiation phase of DNA replication when associated with TMPO isoform Beta. Required for cell cycle G2/M transition and histone deacetylation during mitosis. In mitotic cells recruits HDAC3 to the vicinity of chromatin leading to deacetylation and subsequent phosphorylation at 'Ser-10' of histone H3; in this function seems to act redundantly with AKAP8. May be involved in regulation of pre-mRNA splicing. The chain is A-kinase anchor protein 8-like (Akap8l) from Mus musculus (Mouse).